A 337-amino-acid chain; its full sequence is F420-dependent glucose-6-phosphate dehydrogenase (337 aa).

Aspartate 40 provides a ligand contact to coenzyme F420-(gamma-Glu)n. The active-site Proton donor is the histidine 41. Coenzyme F420-(gamma-Glu)n-binding positions include threonine 77 and 108-109; that span reads TG. The Proton acceptor role is filled by glutamate 110. Residues asparagine 113, 178-179, and 181-182 contribute to the coenzyme F420-(gamma-Glu)n site; these read GG and VV. The substrate site is built by threonine 196, lysine 199, lysine 260, and arginine 284.

Belongs to the F420-dependent glucose-6-phosphate dehydrogenase family. As to quaternary structure, homodimer.

It carries out the reaction oxidized coenzyme F420-(gamma-L-Glu)(n) + D-glucose 6-phosphate + H(+) = 6-phospho-D-glucono-1,5-lactone + reduced coenzyme F420-(gamma-L-Glu)(n). In terms of biological role, catalyzes the coenzyme F420-dependent oxidation of glucose 6-phosphate (G6P) to 6-phosphogluconolactone. The polypeptide is F420-dependent glucose-6-phosphate dehydrogenase (Rhodococcus hoagii (strain 103S) (Rhodococcus equi)).